The following is a 1349-amino-acid chain: Adhesion G protein-coupled receptor F5 (1349 aa).

The signal sequence occupies residues 1–24 (MKSSRTVTLYFVLIVICSSEATWS). The Extracellular segment spans residues 25-1016 (RPAEPIVHPL…PGSLLKILLD (992 aa)). N-linked (GlcNAc...) asparagine glycosylation is found at asparagine 73, asparagine 94, asparagine 185, asparagine 254, asparagine 270, asparagine 286, asparagine 299, asparagine 326, asparagine 337, asparagine 349, asparagine 396, asparagine 470, asparagine 503, asparagine 538, asparagine 649, and asparagine 666. One can recognise an SEA domain in the interval 163–271 (PETYITLKIK…NSFQGTPSNE (109 aa)). 3 consecutive Ig-like domains span residues 268–366 (PSNE…LDVT), 367–464 (PIRI…IAVT), and 469–559 (ANLT…KDVT). Cysteine 291 and cysteine 348 are oxidised to a cystine. Cysteine 389 and cysteine 447 form a disulfide bridge. Residues cysteine 490 and cysteine 543 are joined by a disulfide bond. Serine 819 carries the post-translational modification Phosphoserine. N-linked (GlcNAc...) asparagine glycans are attached at residues asparagine 820, asparagine 958, and asparagine 963. Residues 842–1006 (TPPFLFHPNV…SILMSPDSPD (165 aa)) form the GAIN-B domain. 2 disulfides stabilise this stretch: cysteine 954–cysteine 988 and cysteine 973–cysteine 990. The segment at 954 to 1006 (CVFWNFSLANNTGGWDSSGCTVEDDGRDNRDRVFCKCNHLTSFSILMSPDSPD) is GPS. Positions 994 to 1009 (TSFSILMSPDSPDPGS) are tethered agonist. A helical membrane pass occupies residues 1017 to 1036 (IISYIGLGFSIVSLAACLVV). Topologically, residues 1037–1055 (EAMVWKSVTKNRTSYMRHI) are cytoplasmic. The helical transmembrane segment at 1056–1078 (CIVNIALCLLIADIWFIVAGAIH) threads the bilayer. Residues 1079–1097 (DGHYPLNETACVAATFFIH) lie on the Extracellular side of the membrane. N-linked (GlcNAc...) asparagine glycosylation is present at asparagine 1085. Residues 1098–1120 (FFYLSVFFWMLTLGLMLFYRLIF) traverse the membrane as a helical segment. The Cytoplasmic portion of the chain corresponds to 1121–1131 (ILHDASKSTQK). A helical transmembrane segment spans residues 1132 to 1154 (AIAFSLGYGCPLIISSITVGVTQ). The Extracellular portion of the chain corresponds to 1155–1173 (PQEVYMRKNACWLNWEDTR). Residues 1174 to 1196 (ALLAFAIPALIIVVVNVSITVVV) form a helical membrane-spanning segment. The Cytoplasmic portion of the chain corresponds to 1197 to 1216 (ITKILRPSVGDKPGKQEKSS). The chain crosses the membrane as a helical span at residues 1217–1239 (LFQISKSIGVLTPLLGLTWGFGL). Residues 1240 to 1248 (ATVIQGSNA) are Extracellular-facing. A helical transmembrane segment spans residues 1249–1271 (VFHIIFTLLNAFQGLFILLFGCL). At 1272–1349 (WDQKVQEALL…NSSSAYSLLN (78 aa)) the chain is on the cytoplasmic side. Threonine 1303 carries the post-translational modification Phosphothreonine. Serine 1310 carries the phosphoserine modification. Positions 1329 to 1343 (STPETTSSSVENSSS) are enriched in low complexity. The tract at residues 1329–1349 (STPETTSSSVENSSSAYSLLN) is disordered.

Belongs to the G-protein coupled receptor 2 family. Adhesion G-protein coupled receptor (ADGR) subfamily. Homodimer; disulfide-linked. Heterodimer of 2 chains generated by proteolytic processing; the large extracellular N-terminal fragment and the membrane-bound C-terminal fragment predominantly remain associated and non-covalently linked. Fragment generates by the processing enzyme furin remains attached to the extracellular N-terminal fragment. Interacts (via N-terminal extracellular domain) with SFTPD. Post-translationally, highly glycosylated. In terms of processing, proteolytically cleaved at multiple sites: one in the GPS region of the GAIN-B domain (S1 site) and the other in the SEA domain (S2 site). The proteolytic cleavage at S1 site generates an extracellular subunit and a seven-transmembrane subunit. The proteolytic cleavage at S2 site generates a fragment that undergoes proteolytic cleavage by the processing enzyme furin. Highly expressed in the lung and to a much lesser extent in the kidney and heart. Dense localization in alveolar walls of the lung and in the intercalated cells of the collecting duct of the kidney.

It is found in the cell membrane. As an adhesion G protein-coupled receptor (aGPCR) exhibits a large N-terminal extracellular domain containing highly conserved GPCR autoproteolysis-inducing (GAIN) domain. During synthesis, intracellular autoproteolytic processing of nascent chain within the GAIN domain generates a mature protein, consisting of an N-terminal fragment that is non-covalently linked to the C-terminal fragment. The mature protein is routed to the plasma membrane where the N- and C-terminal fragments remain associated, forming the holoreceptor. Dissociation of the aGPCR fragments stimulates G protein signaling through the action of the tethered-peptide agonist stalk that is occluded within the GAIN domain in the holoreceptor form. This dissociation might be induced by ligand binding, such as that of sFNDC4. In terms of biological role, receptor that plays a critical role in lung surfactant homeostasis. May play a role in controlling adipocyte function. Adhesion G protein-coupled receptor. In alveolar type II (ATII or AT2) cells, required for normal lung surfactant homeostasis. Modulation of both surfactant secretion and uptake by ATII cells is mediated by the downstream activation of GNAQ/GNA11 proteins and may be a consequence of increased cortical F-actin assembly induced by ADGRF5 activation. In the kidney, may play a role in the regulation of acid excretion into the primary urine, possibly by regulating the surface expression of V-ATPase proton pump. As a receptor for soluble FNDC4 (sFNDC4), required for proper systemic glucose tolerance, specifically sensitizing white adipose tissue to insulin. Also plays a role in sFNDC4-induced decrease of local inflammation in white adipose tissue. In Rattus norvegicus (Rat), this protein is Adhesion G protein-coupled receptor F5 (Adgrf5).